Here is a 130-residue protein sequence, read N- to C-terminus: MAQVQYYGTGRRKSSVARVRLVPGEGRVIINGRDFENYIPFAALREVVKQPLVATETLGNYNVLVNVNGGGYTGQAGAIRHGISRALLKADPEYRLTLKRAGLLTRDARMKERKKYGLKGARRAPQFSKR.

It belongs to the universal ribosomal protein uS9 family.

The polypeptide is Small ribosomal subunit protein uS9 (Bacillus mycoides (strain KBAB4) (Bacillus weihenstephanensis)).